Consider the following 569-residue polypeptide: Glutamate--tRNA ligase (569 aa).

The 'HIGH' region motif lies at 107–117 (PEPNGYPHIGH).

This sequence belongs to the class-I aminoacyl-tRNA synthetase family. Glutamate--tRNA ligase type 2 subfamily.

It localises to the cytoplasm. The catalysed reaction is tRNA(Glu) + L-glutamate + ATP = L-glutamyl-tRNA(Glu) + AMP + diphosphate. Functionally, catalyzes the attachment of glutamate to tRNA(Glu) in a two-step reaction: glutamate is first activated by ATP to form Glu-AMP and then transferred to the acceptor end of tRNA(Glu). The sequence is that of Glutamate--tRNA ligase from Nitrosopumilus maritimus (strain SCM1).